Here is an 80-residue protein sequence, read N- to C-terminus: Metallothionein-like protein type 2 MET1 (80 aa).

It belongs to the metallothionein superfamily. Type 15 family.

In terms of biological role, metallothioneins have a high content of cysteine residues that bind various heavy metals. In Fragaria ananassa (Strawberry), this protein is Metallothionein-like protein type 2 MET1 (MET1).